We begin with the raw amino-acid sequence, 896 residues long: Vacuolar zinc transporter TgZnT (896 aa).

Residues 1-472 (MPFSCFVFSQ…ETGTQRARRK (472 aa)) lie on the Cytoplasmic side of the membrane. Residues 82-91 (VLSSRGDESV) show a composition bias toward basic and acidic residues. 3 disordered regions span residues 82–104 (VLSS…SPGF), 205–227 (MKEI…RPCA), and 255–329 (SSSC…SSAS). Composition is skewed to low complexity over residues 210 to 225 (SPRS…SSRP) and 255 to 266 (SSSCCSRSNSSS). Positions 303–322 (VHERRAEATCCAPRDRHGGD) are enriched in basic and acidic residues. The helical transmembrane segment at 473–493 (LVMASMVCCVFMFVEIVAGVL) threads the bilayer. Topologically, residues 494–502 (ANSLALMTD) are vacuolar. A helical transmembrane segment spans residues 503–523 (ASHLLSDLCAFLISLFALWVS). Over 524-539 (ELKGNPSMSFGYHRAE) the chain is Cytoplasmic. Residues 540–560 (ILGALLSVFLIWVLTAVLIYA) form a helical membrane-spanning segment. Residues 561-573 (ACFRLVDPPQVDG) lie on the Vacuolar side of the membrane. Residues 574 to 594 (ELMFWTALLGTLANLFMTHIL) form a helical membrane-spanning segment. Residues 595 to 737 (KVHSHGIGQV…YENMNLRAAY (143 aa)) are Cytoplasmic-facing. The segment at 621 to 707 (LQASSSSPEK…RPFSASSAGS (87 aa)) is disordered. Positions 656 to 680 (RDAEAGRDAEAGRDAEAGRDAETGR) are enriched in basic and acidic residues. Residues 738 to 758 (IHALGDLLQNIGVMIASALIW) form a helical membrane-spanning segment. Topologically, residues 759-762 (WRPD) are vacuolar. A helical transmembrane segment spans residues 763–783 (WAIADPICTFIFSIFVLFTTL). Residues 784 to 896 (SILKEALNVL…CSDPMKVFRR (113 aa)) are Cytoplasmic-facing.

It belongs to the cation diffusion facilitator (CDF) transporter (TC 2.A.4) family. SLC30A subfamily.

The protein resides in the vacuole membrane. The protein localises to the cytoplasmic vesicle membrane. Vacuolar zinc transporter that is probably involved in the transfer of zinc ions from the cytosol to the vacuole for intracellular storage. Plays an essential role in extracellular zinc tolerance. The chain is Vacuolar zinc transporter TgZnT from Toxoplasma gondii (strain ATCC 50853 / GT1).